The sequence spans 500 residues: ATP synthase subunit beta (500 aa).

155–162 (GGAGVGKT) provides a ligand contact to ATP.

It belongs to the ATPase alpha/beta chains family. In terms of assembly, F-type ATPases have 2 components, CF(1) - the catalytic core - and CF(0) - the membrane proton channel. CF(1) has five subunits: alpha(3), beta(3), gamma(1), delta(1), epsilon(1). CF(0) has three main subunits: a(1), b(2) and c(9-12). The alpha and beta chains form an alternating ring which encloses part of the gamma chain. CF(1) is attached to CF(0) by a central stalk formed by the gamma and epsilon chains, while a peripheral stalk is formed by the delta and b chains.

It localises to the cell inner membrane. The enzyme catalyses ATP + H2O + 4 H(+)(in) = ADP + phosphate + 5 H(+)(out). In terms of biological role, produces ATP from ADP in the presence of a proton gradient across the membrane. The catalytic sites are hosted primarily by the beta subunits. This Azobacteroides pseudotrichonymphae genomovar. CFP2 protein is ATP synthase subunit beta.